A 344-amino-acid polypeptide reads, in one-letter code: Protein L-Myc-1-B (344 aa).

2 stretches are compositionally biased toward polar residues: residues 104 to 113 (GSPRVTNTQK) and 213 to 223 (NTMSPQHNFHS). Disordered stretches follow at residues 104–162 (GSPR…EDEI) and 208–271 (LPPE…YLER). Residues 259-270 (DLAKRKNHNYLE) show a composition bias toward basic and acidic residues. In terms of domain architecture, bHLH spans 261–313 (AKRKNHNYLERKRRNDLRSRFLALREEVPSLSRSTKTPKVVVLSKATEFLKGL). The tract at residues 313–341 (LVIQEQQLTAEKLKLWSRHQQLLRRISQL) is leucine-zipper.

Efficient DNA binding requires dimerization with another bHLH protein. Binds DNA as a heterodimer with MAX. In terms of tissue distribution, high levels in oocytes, modest levels in kidney and low levels in spleen.

The protein resides in the nucleus. This is Protein L-Myc-1-B (mycl1-b) from Xenopus laevis (African clawed frog).